We begin with the raw amino-acid sequence, 62 residues long: U10-hottentoxin-Hj3a (62 aa).

Positions 1–22 (MQKLLIILILFCILKFNVDVEG) are cleaved as a signal peptide. 3 disulfide bridges follow: Cys-28-Cys-46, Cys-33-Cys-59, and Cys-37-Cys-61.

This sequence belongs to the short scorpion toxin superfamily. Potassium channel inhibitor family. Alpha-KTx 23 subfamily. In terms of tissue distribution, expressed by the venom gland.

The protein resides in the secreted. Functionally, may block potassium channels. The protein is U10-hottentoxin-Hj3a of Hottentotta judaicus (Black scorpion).